The chain runs to 40 residues: Sapecin-C (40 aa).

3 disulfides stabilise this stretch: C3-C30, C16-C36, and C20-C38.

This sequence belongs to the invertebrate defensin family. Type 1 subfamily. In terms of tissue distribution, hemocytes and fat body.

The protein resides in the secreted. Sapecins, which are potent bactericidal proteins, are produced in response to injury. Sapecin C is cytotoxic to Gram-positive bacteria. The protein is Sapecin-C of Sarcophaga peregrina (Flesh fly).